The following is a 489-amino-acid chain: MFS-type transporter MFS19 (489 aa).

Over residues 1-12 the composition is skewed to basic and acidic residues; that stretch reads MAHSTAGDRDPE. Positions 1-42 are disordered; the sequence is MAHSTAGDRDPEVGSEQHSSIAQLHTESMSDPWGDSNSPENP. Residues 16-41 are compositionally biased toward polar residues; that stretch reads EQHSSIAQLHTESMSDPWGDSNSPEN. Residues 52 to 72 traverse the membrane as a helical segment; the sequence is FHVAIVSIFTLTANLAATMFA. 2 N-linked (GlcNAc...) asparagine glycosylation sites follow: Asn83 and Asn86. 11 consecutive transmembrane segments (helical) span residues 91-111, 127-147, 149-169, 180-200, 208-228, 282-302, 321-341, 361-381, 388-408, 425-445, and 454-474; these read AMTV…LAPL, VYIA…FLVF, FLCG…VADI, ALFA…GGYV, WTFR…MFFM, PIVL…FLLF, GLAY…FSIL, LILM…YGWS, WIVP…VVIP, ALAA…LVAA, and GWGN…PWLF.

Belongs to the major facilitator superfamily.

It localises to the cell membrane. Its function is as follows. MFS-type efflux pump involved in the modulation susceptibility to various compounds including cumyl hydroperoxide, potassium superoxide, many singlet oxygen-generating compounds (eosin Y, rose Bengal, hematoporphyrin, methylene blue, and cercosporin), and the cell wall biosynthesis inhibitor Congo red. Involved in oxidative stress tolerance, colonization, and lesion formation. In Alternaria alternata (Alternaria rot fungus), this protein is MFS-type transporter MFS19.